The chain runs to 1939 residues: Myosin-4 (1939 aa).

In terms of domain architecture, Myosin N-terminal SH3-like spans 33–82 (DAKTSVFVVDPKESYVKAIVQSREGGKVTAKTEAGATVTVKEDQVFSMNP). A phosphothreonine mark is found at Thr64 and Thr69. Residue Ser79 is modified to Phosphoserine. Positions 86–782 (DKIEDMAMMT…LLGTLEEMRD (697 aa)) constitute a Myosin motor domain. An N6,N6,N6-trimethyllysine modification is found at Lys130. Residue 179 to 186 (GESGAGKT) participates in ATP binding. The residue at position 389 (Tyr389) is a Phosphotyrosine. A Phosphothreonine modification is found at Thr391. The residue at position 392 (Ser392) is a Phosphoserine. Thr419 carries the post-translational modification Phosphothreonine. Residue Tyr424 is modified to Phosphotyrosine. At Ser625 the chain carries Phosphoserine. The interval 659–681 (LNKLMTNLRSTHPHFVRCIIPNE) is actin-binding. Pros-methylhistidine is present on His757. The segment at 761–775 (KFGHTKVFFKAGLLG) is actin-binding. Residue Thr776 is modified to Phosphothreonine. The 30-residue stretch at 785 to 814 (LAQLITRTQAICRGFLMRVEFRKMMERRES) folds into the IQ domain. Residues 843-1939 (LLKSAETEKE…EVHTKVISEE (1097 aa)) are a coiled coil. Residues Ser1092, Ser1162, and Ser1237 each carry the phosphoserine modification. Thr1241 is subject to Phosphothreonine. Position 1243 is a phosphoserine (Ser1243). Thr1255 bears the Phosphothreonine mark. Ser1261 bears the Phosphoserine mark. At Thr1265 the chain carries Phosphothreonine. Residue Ser1278 is modified to Phosphoserine. Thr1286 carries the post-translational modification Phosphothreonine. Phosphoserine is present on residues Ser1288, Ser1292, Ser1303, Ser1306, and Ser1413. The residue at position 1464 (Tyr1464) is a Phosphotyrosine. Thr1467 is subject to Phosphothreonine. Ser1474 is modified (phosphoserine). Tyr1492 is modified (phosphotyrosine). A Phosphoserine modification is found at Ser1495. Thr1501 bears the Phosphothreonine mark. A Phosphoserine modification is found at Ser1514. The residue at position 1517 (Thr1517) is a Phosphothreonine. Phosphoserine is present on residues Ser1542, Ser1547, Ser1554, Ser1574, Ser1600, Ser1603, Ser1714, and Ser1726. 2 positions are modified to phosphothreonine: Thr1730 and Thr1736. Ser1739 carries the phosphoserine modification.

It belongs to the TRAFAC class myosin-kinesin ATPase superfamily. Myosin family. In terms of assembly, muscle myosin is a hexameric protein that consists of 2 heavy chain subunits (MHC), 2 alkali light chain subunits (MLC) and 2 regulatory light chain subunits (MLC-2).

It is found in the cytoplasm. Its subcellular location is the myofibril. Its function is as follows. Muscle contraction. In Homo sapiens (Human), this protein is Myosin-4 (MYH4).